The following is an 883-amino-acid chain: Leucine--tRNA ligase (883 aa).

The 'HIGH' region signature appears at 43–53 (PYPSGRIHIGH). The 'KMSKS' region motif lies at 630-634 (KMSKS). K633 is a binding site for ATP.

Belongs to the class-I aminoacyl-tRNA synthetase family.

Its subcellular location is the cytoplasm. The enzyme catalyses tRNA(Leu) + L-leucine + ATP = L-leucyl-tRNA(Leu) + AMP + diphosphate. The chain is Leucine--tRNA ligase from Nitrobacter winogradskyi (strain ATCC 25391 / DSM 10237 / CIP 104748 / NCIMB 11846 / Nb-255).